The following is a 545-amino-acid chain: CTP synthase (545 aa).

The amidoligase domain stretch occupies residues 1 to 266 (MTTNYIFVTG…DDYICKRFSL (266 aa)). Serine 14 contacts CTP. Serine 14 lines the UTP pocket. ATP-binding positions include 15-20 (SLGKGI) and aspartate 72. Mg(2+)-binding residues include aspartate 72 and glutamate 140. CTP-binding positions include 147-149 (DIE), 187-192 (KTKPTQ), and lysine 223. Residues 187 to 192 (KTKPTQ) and lysine 223 contribute to the UTP site. Residue 239–241 (KDV) participates in ATP binding. Residues 291–542 (TIGMVGKYIE…VKAASEFQKR (252 aa)) form the Glutamine amidotransferase type-1 domain. Glycine 352 is a binding site for L-glutamine. Cysteine 379 acts as the Nucleophile; for glutamine hydrolysis in catalysis. L-glutamine-binding positions include 380–383 (LGMQ), glutamate 403, and arginine 470. Residues histidine 515 and glutamate 517 contribute to the active site.

This sequence belongs to the CTP synthase family. Homotetramer.

It catalyses the reaction UTP + L-glutamine + ATP + H2O = CTP + L-glutamate + ADP + phosphate + 2 H(+). It carries out the reaction L-glutamine + H2O = L-glutamate + NH4(+). The enzyme catalyses UTP + NH4(+) + ATP = CTP + ADP + phosphate + 2 H(+). Its pathway is pyrimidine metabolism; CTP biosynthesis via de novo pathway; CTP from UDP: step 2/2. Allosterically activated by GTP, when glutamine is the substrate; GTP has no effect on the reaction when ammonia is the substrate. The allosteric effector GTP functions by stabilizing the protein conformation that binds the tetrahedral intermediate(s) formed during glutamine hydrolysis. Inhibited by the product CTP, via allosteric rather than competitive inhibition. Functionally, catalyzes the ATP-dependent amination of UTP to CTP with either L-glutamine or ammonia as the source of nitrogen. Regulates intracellular CTP levels through interactions with the four ribonucleotide triphosphates. The polypeptide is CTP synthase (Shigella boydii serotype 18 (strain CDC 3083-94 / BS512)).